Consider the following 166-residue polypeptide: Prorelaxin H1 (166 aa).

A signal peptide spans serine 1–alanine 5. 3 disulfides stabilise this stretch: cysteine 16–cysteine 153, cysteine 28–cysteine 166, and cysteine 152–cysteine 157. The propeptide at serine 37–glutamine 139 is connecting peptide.

This sequence belongs to the insulin family. As to quaternary structure, heterodimer of a B chain and an A chain linked by two disulfide bonds. Expressed in the corpus luteum of pregnancy but not in the placenta.

Its subcellular location is the secreted. Relaxin is an ovarian hormone that acts with estrogen to produce dilatation of the birth canal in many mammals. May be involved in remodeling of connective tissues during pregnancy, promoting growth of pubic ligaments and ripening of the cervix. The polypeptide is Prorelaxin H1 (RNL1) (Pan troglodytes (Chimpanzee)).